The sequence spans 494 residues: Cobyric acid synthase (494 aa).

A GATase cobBQ-type domain is found at 248–444; sequence EIEIAIIKLP…LHGIFENDEW (197 aa). Cys-329 acts as the Nucleophile in catalysis. His-436 is an active-site residue.

This sequence belongs to the CobB/CobQ family. CobQ subfamily.

It participates in cofactor biosynthesis; adenosylcobalamin biosynthesis. Functionally, catalyzes amidations at positions B, D, E, and G on adenosylcobyrinic A,C-diamide. NH(2) groups are provided by glutamine, and one molecule of ATP is hydrogenolyzed for each amidation. This chain is Cobyric acid synthase, found in Prochlorococcus marinus (strain NATL1A).